Reading from the N-terminus, the 251-residue chain is CDP-diacylglycerol pyrophosphatase (251 aa).

A helical membrane pass occupies residues 4–24 (AGLLFLVMIVIAVVAAGIGYW).

This sequence belongs to the Cdh family.

It localises to the cell inner membrane. The catalysed reaction is a CDP-1,2-diacyl-sn-glycerol + H2O = a 1,2-diacyl-sn-glycero-3-phosphate + CMP + 2 H(+). The protein operates within phospholipid metabolism; CDP-diacylglycerol degradation; phosphatidate from CDP-diacylglycerol: step 1/1. The protein is CDP-diacylglycerol pyrophosphatase of Shigella boydii serotype 4 (strain Sb227).